The primary structure comprises 409 residues: Peptidase T (409 aa).

His78 lines the Zn(2+) pocket. Asp80 is a catalytic residue. Asp140 lines the Zn(2+) pocket. The active-site Proton acceptor is Glu174. Residues Glu175, Asp197, and His379 each coordinate Zn(2+).

The protein belongs to the peptidase M20B family. Requires Zn(2+) as cofactor.

The protein localises to the cytoplasm. The catalysed reaction is Release of the N-terminal residue from a tripeptide.. Cleaves the N-terminal amino acid of tripeptides. The protein is Peptidase T of Photobacterium profundum (strain SS9).